We begin with the raw amino-acid sequence, 211 residues long: Protein-L-isoaspartate O-methyltransferase (211 aa).

Residue S62 is part of the active site.

This sequence belongs to the methyltransferase superfamily. L-isoaspartyl/D-aspartyl protein methyltransferase family.

The protein resides in the cytoplasm. The enzyme catalyses [protein]-L-isoaspartate + S-adenosyl-L-methionine = [protein]-L-isoaspartate alpha-methyl ester + S-adenosyl-L-homocysteine. Catalyzes the methyl esterification of L-isoaspartyl residues in peptides and proteins that result from spontaneous decomposition of normal L-aspartyl and L-asparaginyl residues. It plays a role in the repair and/or degradation of damaged proteins. The protein is Protein-L-isoaspartate O-methyltransferase of Shewanella baltica (strain OS195).